We begin with the raw amino-acid sequence, 110 residues long: Probable ribonuclease HepT (110 aa).

Catalysis depends on residues arginine 75 and histidine 80. Positions 75–82 (RDKLIHAY) match the RX(4)HXY motif motif. Tyrosine 82 carries the post-translational modification O-di-AMP-tyrosine.

The protein belongs to the HepT RNase toxin family. Modified by cognate antitoxin MntA; probably at least 2 successive AMPylation events occur on Tyr-82.

Toxic component of a type VII toxin-antitoxin (TA) system. Overexpression in E.coli inhibits cell growth. Neutralized by cognate antitoxin MntA. Neutralization is probably due to AMPylation by MntA. Probably an RNAase. This chain is Probable ribonuclease HepT, found in Thermococcus cleftensis (strain DSM 27260 / KACC 17922 / CL1).